The sequence spans 366 residues: MLIWLVELSEYFKFLNLFRYITFRTGAALFTSALIVFLFGPTIINSLRIRQGKGQPIRADGPQTHFKKAGTPTMGGLMILAGIVGASLLWADLSNVYVVATLLVTLGFGAIGFYDDYLKVTKQSHKGFSGKARLGIEFVIAGIAVYFMMRTALASGTAGSTFGSSIAFPFFKDFLINLGIMFVVFGGFVIVGAGNAVNLTDGLDGLAIVPVMIAAASFGVIAYLAGNVVFANYLQINFVPGTGELAVVLGAVIGAGLGFLWFNAPPAAIFMGDTGSLALGGTIGTVAVATKHEIVMAIIGGLFVMETLSVIIQVGFFKMTGRRVFLMAPIHHHFEKKGWTESQVVIRFWIIAVGLALLGLSTLKLR.

10 helical membrane-spanning segments follow: residues 27–47, 71–91, 93–113, 134–154, 174–194, 205–225, 245–265, 268–288, 294–314, and 343–363; these read AALF…INSL, TPTM…LLWA, LSNV…AIGF, LGIE…TALA, FLIN…VGAG, GLAI…AYLA, LAVV…FNAP, AIFM…TVAV, IVMA…IIQV, and QVVI…LSTL.

The protein belongs to the glycosyltransferase 4 family. MraY subfamily. It depends on Mg(2+) as a cofactor.

It is found in the cell inner membrane. The catalysed reaction is UDP-N-acetyl-alpha-D-muramoyl-L-alanyl-gamma-D-glutamyl-meso-2,6-diaminopimeloyl-D-alanyl-D-alanine + di-trans,octa-cis-undecaprenyl phosphate = di-trans,octa-cis-undecaprenyl diphospho-N-acetyl-alpha-D-muramoyl-L-alanyl-D-glutamyl-meso-2,6-diaminopimeloyl-D-alanyl-D-alanine + UMP. It participates in cell wall biogenesis; peptidoglycan biosynthesis. Functionally, catalyzes the initial step of the lipid cycle reactions in the biosynthesis of the cell wall peptidoglycan: transfers peptidoglycan precursor phospho-MurNAc-pentapeptide from UDP-MurNAc-pentapeptide onto the lipid carrier undecaprenyl phosphate, yielding undecaprenyl-pyrophosphoryl-MurNAc-pentapeptide, known as lipid I. This chain is Phospho-N-acetylmuramoyl-pentapeptide-transferase, found in Rhizobium etli (strain ATCC 51251 / DSM 11541 / JCM 21823 / NBRC 15573 / CFN 42).